Reading from the N-terminus, the 183-residue chain is ATP synthase subunit delta (183 aa).

Belongs to the ATPase delta chain family. In terms of assembly, F-type ATPases have 2 components, F(1) - the catalytic core - and F(0) - the membrane proton channel. F(1) has five subunits: alpha(3), beta(3), gamma(1), delta(1), epsilon(1). F(0) has three main subunits: a(1), b(2) and c(10-14). The alpha and beta chains form an alternating ring which encloses part of the gamma chain. F(1) is attached to F(0) by a central stalk formed by the gamma and epsilon chains, while a peripheral stalk is formed by the delta and b chains.

Its subcellular location is the cell inner membrane. In terms of biological role, f(1)F(0) ATP synthase produces ATP from ADP in the presence of a proton or sodium gradient. F-type ATPases consist of two structural domains, F(1) containing the extramembraneous catalytic core and F(0) containing the membrane proton channel, linked together by a central stalk and a peripheral stalk. During catalysis, ATP synthesis in the catalytic domain of F(1) is coupled via a rotary mechanism of the central stalk subunits to proton translocation. This protein is part of the stalk that links CF(0) to CF(1). It either transmits conformational changes from CF(0) to CF(1) or is implicated in proton conduction. This Desulfosudis oleivorans (strain DSM 6200 / JCM 39069 / Hxd3) (Desulfococcus oleovorans) protein is ATP synthase subunit delta.